A 271-amino-acid polypeptide reads, in one-letter code: DNA repair protein RecO (271 aa).

The protein belongs to the RecO family.

Functionally, involved in DNA repair and RecF pathway recombination. This is DNA repair protein RecO from Synechococcus sp. (strain CC9311).